Here is a 365-residue protein sequence, read N- to C-terminus: tRNA(Met) cytidine acetate ligase (365 aa).

ATP-binding positions include 7–20 (IAEFNPFHNGHKYL), G96, N152, and R175.

This sequence belongs to the TmcAL family.

It is found in the cytoplasm. The catalysed reaction is cytidine(34) in elongator tRNA(Met) + acetate + ATP = N(4)-acetylcytidine(34) in elongator tRNA(Met) + AMP + diphosphate. Functionally, catalyzes the formation of N(4)-acetylcytidine (ac(4)C) at the wobble position of elongator tRNA(Met), using acetate and ATP as substrates. First activates an acetate ion to form acetyladenylate (Ac-AMP) and then transfers the acetyl group to tRNA to form ac(4)C34. The sequence is that of tRNA(Met) cytidine acetate ligase from Streptococcus pneumoniae (strain ATCC 700669 / Spain 23F-1).